Here is a 265-residue protein sequence, read N- to C-terminus: MDYINAAILGVIEGITEFLPISSTGHLIIAEQWLGHRSDMFNIVIQAGAILAVTIIYWRRLVDLVLGWRDPVNRDYAAKLIVAFLITAILGLVVKKLGFELPETATPIAWALIIGGIWMIFAEWAAARRPPHKEITWLVAILVGIAQIVAGVFPGTSRSGATIFVAMLAGTGNRASATEFAFLVGIPTMYAASAYELLKTFRDGGAAGEDWTALGIAFVVSTVVAFIAVKWLLAYIRSNRFTLFAIYRIILGVLLLGMAATGLIA.

7 helical membrane-spanning segments follow: residues 38 to 58 (SDMF…IIYW), 80 to 100 (LIVA…LGFE), 107 to 127 (PIAW…WAAA), 135 to 155 (ITWL…VFPG), 178 to 198 (TEFA…YELL), 216 to 236 (IAFV…LAYI), and 244 to 264 (FAIY…TGLI).

The protein belongs to the UppP family.

It localises to the cell inner membrane. It carries out the reaction di-trans,octa-cis-undecaprenyl diphosphate + H2O = di-trans,octa-cis-undecaprenyl phosphate + phosphate + H(+). Its function is as follows. Catalyzes the dephosphorylation of undecaprenyl diphosphate (UPP). Confers resistance to bacitracin. The polypeptide is Undecaprenyl-diphosphatase (Rhizobium johnstonii (strain DSM 114642 / LMG 32736 / 3841) (Rhizobium leguminosarum bv. viciae)).